We begin with the raw amino-acid sequence, 775 residues long: MKTVIARTSSKLARTPRMNEEIVGFEDVIENLRKKLLSETKGQDVISIHGMPGLGKTTLANRLYSDRSVVSQFDICAQCCVSQVYSYKDLLLSLLRDAIGDESGSRELPDNELADMLRKTLLPRRYLILVDDVWDNSAWDDLRGCFPDVNNRSRIILTTRHHEVAKYASVHSDPLHLRMFYEDESWKLLEKKVFGEQSCSPLLKDVGLRIAKLCGKLPLSIVFVAGTLSEMEKEVECWEQMANNLGGPKLSSFLEDRVIDISRLIRLWISESFIKSSEGRSLEDIAEGYLENLIGRNLVMVTQRADSDGMVKACRLHDVLLDFCKKRAAEENFLLCIKRDQSTKAVISHKQQAHLAFSKMDNLVEWSASSSLVGSVIFKSYDPYFARCPLSSHAFALSHILINFKFLKVLDLEHQVVIDFNPTEHFYLRYLSAHIDQNSIPSSISNLWNLETLILKRTPAGRLNTLLLPSTIWDMVKLRHLHIPNFRAESEDALLENSAKLYDLETLSTTYFSSVEKAELMLRKTPNLRKLICEVQFLEYPNQYHVLNFPVRLEMLKLYRFNNSKVIPFYISAPNLKYLKLSGFYLDSHYLSETADHLKHLEVLKLYRVEFGDHGEWKVSNGMFPQLKILKLNYVCLMKWIVADDAFPNLEQLVLRGCKDLMEIPFCFMDILSLKYIELDNCNKSVVKSAKDIEEAQVEDNQNTNFKLVIIKKMILQFDISHDKEIDNAFKRLASLPGVDSISIDMIEKKLTVGGDMNANEVRLVVGKLIDSGML.

Positions 16–39 (PRMNEEIVGFEDVIENLRKKLLSE) form a coiled coil. Positions 17–237 (RMNEEIVGFE…LSEMEKEVEC (221 aa)) constitute an NB-ARC domain. ATP is bound at residue 50–57 (GMPGLGKT). The HMA domain maps to 711-775 (IKKMILQFDI…VGKLIDSGML (65 aa)).

This sequence belongs to the disease resistance NB-LRR family.

It localises to the cytoplasm. Its subcellular location is the membrane. In terms of biological role, confers resistance to late blight (Phytophthora infestans) races carrying the avirulence gene Avr1. Resistance proteins guard the plant against pathogens that contain an appropriate avirulence protein via an indirect interaction with this avirulence protein. That triggers a defense system including the hypersensitive response, which restricts the pathogen growth. The protein is Putative late blight resistance protein homolog R1A-3 (R1A-3) of Solanum demissum (Wild potato).